A 296-amino-acid chain; its full sequence is HTH-type transcriptional activator AmpR (296 aa).

In terms of domain architecture, HTH lysR-type spans 6-63; that stretch reads LPLNALRAFEASARHLSFTRAAIELCVTQAAVSHQVKSLEERLGVALFKRLPRGLMLT. A DNA-binding region (H-T-H motif) is located at residues 23 to 42; it reads FTRAAIELCVTQAAVSHQVK. The segment at 83–296 is includes the LysR substrate-binding / effector-binding domain, involved in binding to specific cell-wall-derived muropeptide products, some of which have signaling functions, leading to disparate responses such as antibiotic resistance, virulence, and host cell inflammation; sequence LLERFEGGHY…EMAAVEARGR (214 aa). One can recognise a LysR substrate-binding domain in the interval 91 to 289; sequence HYRDVLTVGA…AFRGWLLEMA (199 aa).

This sequence belongs to the LysR transcriptional regulatory family. In terms of assembly, homodimer.

It is found in the cytoplasm. It localises to the membrane. Functionally, transcription regulator that plays a critical role in the expression of beta-lactamase AmpC, acting by positive regulation of the ampC gene. Has a wider role in the regulation of expression of genes involved in proteolysis, quorum sensing, and virulence. Acts by binding directly to the promoter region of the ampC gene. Probably does not regulate transcription of its own gene. The protein is HTH-type transcriptional activator AmpR (ampR) of Pseudomonas aeruginosa (strain ATCC 15692 / DSM 22644 / CIP 104116 / JCM 14847 / LMG 12228 / 1C / PRS 101 / PAO1).